A 92-amino-acid polypeptide reads, in one-letter code: Putative regulatory protein CKL_1364 (92 aa).

It belongs to the RemA family.

This chain is Putative regulatory protein CKL_1364, found in Clostridium kluyveri (strain ATCC 8527 / DSM 555 / NBRC 12016 / NCIMB 10680 / K1).